The sequence spans 401 residues: N-acetyllactosaminide beta-1,6-N-acetylglucosaminyl-transferase (401 aa).

Topologically, residues 1–7 are cytoplasmic; it reads MPPSVRY. A helical; Signal-anchor for type II membrane protein membrane pass occupies residues 8–28; sequence FFIVSVTTVIVFIVLYVLSFG. Topologically, residues 29–401 are lumenal; it reads GDQSYQKLNI…EIAIQPSWYF (373 aa). 4 N-linked (GlcNAc...) asparagine glycosylation sites follow: Asn37, Asn255, Asn315, and Asn389.

This sequence belongs to the glycosyltransferase 14 family.

The protein localises to the golgi apparatus membrane. The catalysed reaction is a beta-D-Gal-(1-&gt;4)-beta-D-GlcNAc-(1-&gt;3)-beta-D-Gal-(1-&gt;4)-beta-D-GlcNAc derivative + UDP-N-acetyl-alpha-D-glucosamine = a beta-D-Gal-(1-&gt;4)-beta-D-GlcNAc-(1-&gt;3)-[beta-D-GlcNAc-(1-&gt;6)]-beta-D-Gal-(1-&gt;4)-N-acetyl-beta-D-glucosaminyl derivative + UDP + H(+). It functions in the pathway protein modification; protein glycosylation. Functionally, branching enzyme that converts linear into branched poly-N-acetyllactosaminoglycans. Introduces the blood group I antigen during embryonic development. It is closely associated with the development and maturation of erythroid cells. In Mus musculus (Mouse), this protein is N-acetyllactosaminide beta-1,6-N-acetylglucosaminyl-transferase (Gcnt2).